A 422-amino-acid polypeptide reads, in one-letter code: Histone-binding protein MSI1 (422 aa).

WD repeat units follow at residues 127–158, 198–238, 249–289, 294–334, 338–379, and 382–421; these read FPNGECNRARYLPQNPDIIAGASSDGAIYIFD, ADIN…HENP, SDGT…EKLQ, KHDG…KSPI, EHGT…TIFT, and GHMLGVNDISWDAHDPWLMCSVANDNSVHIWKPAGNLVGH.

This sequence belongs to the WD repeat RBAP46/RBAP48/MSI1 family. In terms of assembly, component of chromatin assembly factor 1 (CAF-1), composed of MSI1/p50, CAC2/p60 and CAC1/p90. Interacts with protein kinase NPR1. Interacts with RTT106.

Its subcellular location is the cytoplasm. The protein resides in the nucleus. Its function is as follows. Acts as a component of the histone chaperone complex chromatin assembly factor 1 (CAF-1), which assembles histone octamers onto DNA during replication and repair. CAF-1 performs the first step of the nucleosome assembly process, bringing newly synthesized histones H3 and H4 to replicating DNA; histones H2A/H2B can bind to this chromatin precursor subsequent to DNA replication to complete the histone octamer. Plays a role in the maintenance of heterochromatin. Independently, MSI1 is involved in regulation of the RAS/cAMP pathway via sequestration of NPR1. The chain is Histone-binding protein MSI1 (MSI1) from Saccharomyces cerevisiae (strain ATCC 204508 / S288c) (Baker's yeast).